Consider the following 395-residue polypeptide: Putative 8-amino-7-oxononanoate synthase (395 aa).

Arg23 is a substrate binding site. 110–111 (GF) provides a ligand contact to pyridoxal 5'-phosphate. His135 contacts substrate. Pyridoxal 5'-phosphate-binding positions include Ser182, 207–210 (DEAH), and 239–242 (TFSK). The residue at position 242 (Lys242) is an N6-(pyridoxal phosphate)lysine. Thr356 is a substrate binding site.

This sequence belongs to the class-II pyridoxal-phosphate-dependent aminotransferase family. BioF subfamily. In terms of assembly, homodimer. The cofactor is pyridoxal 5'-phosphate.

The enzyme catalyses 6-carboxyhexanoyl-[ACP] + L-alanine + H(+) = (8S)-8-amino-7-oxononanoate + holo-[ACP] + CO2. Its pathway is cofactor biosynthesis; biotin biosynthesis. In terms of biological role, catalyzes the decarboxylative condensation of pimeloyl-[acyl-carrier protein] and L-alanine to produce 8-amino-7-oxononanoate (AON), [acyl-carrier protein], and carbon dioxide. The polypeptide is Putative 8-amino-7-oxononanoate synthase (bioF) (Bacillus anthracis).